The following is a 591-amino-acid chain: Aspartate--tRNA(Asp/Asn) ligase (591 aa).

L-aspartate is bound at residue E176. An aspartate region spans residues 200–203 (QLFK). Residue R222 coordinates L-aspartate. Residues 222 to 224 (RDE) and Q231 each bind ATP. H450 lines the L-aspartate pocket. E484 is an ATP binding site. R491 lines the L-aspartate pocket. 536-539 (GLDR) contacts ATP.

The protein belongs to the class-II aminoacyl-tRNA synthetase family. Type 1 subfamily. Homodimer.

The protein localises to the cytoplasm. It catalyses the reaction tRNA(Asx) + L-aspartate + ATP = L-aspartyl-tRNA(Asx) + AMP + diphosphate. Aspartyl-tRNA synthetase with relaxed tRNA specificity since it is able to aspartylate not only its cognate tRNA(Asp) but also tRNA(Asn). Reaction proceeds in two steps: L-aspartate is first activated by ATP to form Asp-AMP and then transferred to the acceptor end of tRNA(Asp/Asn). The polypeptide is Aspartate--tRNA(Asp/Asn) ligase (Bacillus cereus (strain AH187)).